The primary structure comprises 349 residues: Pseudouridylate synthase TRUB1 (349 aa).

A2 is modified (N-acetylalanine). S11 carries the post-translational modification Phosphoserine. D121 (nucleophile) is an active-site residue.

This sequence belongs to the pseudouridine synthase TruB family. Highly expressed in heart, skeletal muscle and liver. Expressed at lower levels in lung, small intestine, kidney and spleen.

The protein localises to the nucleus. The protein resides in the cytoplasm. Its subcellular location is the cytosol. It carries out the reaction a uridine in mRNA = a pseudouridine in mRNA. The enzyme catalyses a uridine in tRNA = a pseudouridine in tRNA. It catalyses the reaction uridine(55) in tRNA = pseudouridine(55) in tRNA. In terms of biological role, pseudouridine synthase that catalyzes pseudouridylation of mRNAs and tRNAs. Mediates pseudouridylation of mRNAs with the consensus sequence 5'-GUUCNANNC-3', harboring a stem-loop structure. Constitutes the major pseudouridine synthase acting on mRNAs. Also catalyzes pseudouridylation of some tRNAs, including synthesis of pseudouridine(55) from uracil-55, in the psi GC loop of a subset of tRNAs. Promotes the processing of pri-let-7 microRNAs (pri-miRNAs) independently of its RNA pseudouridylate synthase activity. Acts by binding to the stem-loop structure on pri-let-7, preventing LIN28-binding (LIN28A and/or LIN28B), thereby enhancing the interaction between pri-let-7 and the microprocessor DGCR8, which mediates miRNA maturation. This is Pseudouridylate synthase TRUB1 from Homo sapiens (Human).